Reading from the N-terminus, the 268-residue chain is Aminoglycoside 3'-phosphotransferase (268 aa).

D188 acts as the Proton acceptor in catalysis.

It belongs to the aminoglycoside phosphotransferase family.

It carries out the reaction kanamycin A + ATP = kanamycin 3'-phosphate + ADP + H(+). Its function is as follows. Resistance to kanamycin and structurally-related aminoglycosides, including amikacin. In Streptomyces fradiae (Streptomyces roseoflavus), this protein is Aminoglycoside 3'-phosphotransferase (aph).